Consider the following 740-residue polypeptide: Melanoma-associated antigen D4 (740 aa).

Residues 1 to 11 are compositionally biased toward basic and acidic residues; that stretch reads MAEGSYRKESE. Disordered stretches follow at residues 1-27, 139-208, 242-298, and 321-377; these read MAEG…EVGE, ATHQ…GPST, PAGV…ALAK, and IPEP…ASQP. Acidic residues predominate over residues 14-27; it reads NVEDMDEGSDEVGE. 2 stretches are compositionally biased toward polar residues: residues 141-155 and 162-175; these read HQAS…TSAA and PETS…SRML. Residues 185-207 show a composition bias toward low complexity; the sequence is APARSPQPQTSSQAQEAAAEGPS. A compositionally biased stretch (low complexity) spans 321–337; the sequence is IPEPESAAATSQQSAEP. A compositionally biased stretch (acidic residues) spans 354 to 363; sequence DEYESGEEER. Residues 414 to 612 form the MAGE domain; the sequence is LQERANKLVK…REWRAHFLEA (199 aa). Residues 697–722 form a disordered region; the sequence is WRAGVSSGTNGAASASMLDGPSTSST.

In terms of assembly, interacts with TRIM27.

Functionally, may enhance ubiquitin ligase activity of RING-type zinc finger-containing E3 ubiquitin-protein ligases. Proposed to act through recruitment and/or stabilization of the Ubl-conjugating enzyme (E2) at the E3:substrate complex. The protein is Melanoma-associated antigen D4 (MAGED4) of Bos taurus (Bovine).